Reading from the N-terminus, the 57-residue chain is MLGWALTFFILAIIAALLGFGGIAGAAASIAKILFFVFLALLVITFVARALRGRSIT.

Transmembrane regions (helical) follow at residues Trp4–Ala24 and Ala27–Val47.

This sequence belongs to the UPF0391 family.

It localises to the cell membrane. The sequence is that of UPF0391 membrane protein HNE_2348 from Hyphomonas neptunium (strain ATCC 15444).